The sequence spans 238 residues: Ribonuclease PH (238 aa).

Phosphate contacts are provided by residues R86 and 124 to 126 (GTR).

It belongs to the RNase PH family. Homohexameric ring arranged as a trimer of dimers.

The catalysed reaction is tRNA(n+1) + phosphate = tRNA(n) + a ribonucleoside 5'-diphosphate. Phosphorolytic 3'-5' exoribonuclease that plays an important role in tRNA 3'-end maturation. Removes nucleotide residues following the 3'-CCA terminus of tRNAs; can also add nucleotides to the ends of RNA molecules by using nucleoside diphosphates as substrates, but this may not be physiologically important. Probably plays a role in initiation of 16S rRNA degradation (leading to ribosome degradation) during starvation. The protein is Ribonuclease PH of Serratia proteamaculans (strain 568).